Here is a 238-residue protein sequence, read N- to C-terminus: Probable transcriptional regulatory protein YeeN (238 aa).

Belongs to the TACO1 family. YeeN subfamily.

Its subcellular location is the cytoplasm. In Escherichia coli O157:H7, this protein is Probable transcriptional regulatory protein YeeN.